We begin with the raw amino-acid sequence, 84 residues long: Small ribosomal subunit protein bS20 (84 aa).

Residues 62–72 (KNKARRLKSRA) show a composition bias toward basic residues. Residues 62 to 84 (KNKARRLKSRAARWSNSATAASR) form a disordered region. Positions 75-84 (WSNSATAASR) are enriched in polar residues.

The protein belongs to the bacterial ribosomal protein bS20 family.

Binds directly to 16S ribosomal RNA. The chain is Small ribosomal subunit protein bS20 from Mycoplasmoides gallisepticum (strain R(low / passage 15 / clone 2)) (Mycoplasma gallisepticum).